Reading from the N-terminus, the 431-residue chain is UDP-N-acetylmuramate--L-alanine ligase (431 aa).

108–114 (GAHGKST) provides a ligand contact to ATP.

It belongs to the MurCDEF family.

The protein resides in the cytoplasm. The enzyme catalyses UDP-N-acetyl-alpha-D-muramate + L-alanine + ATP = UDP-N-acetyl-alpha-D-muramoyl-L-alanine + ADP + phosphate + H(+). The protein operates within cell wall biogenesis; peptidoglycan biosynthesis. Its function is as follows. Cell wall formation. The chain is UDP-N-acetylmuramate--L-alanine ligase from Campylobacter jejuni (strain RM1221).